The following is a 149-amino-acid chain: Endoribonuclease YbeY (149 aa).

Zn(2+)-binding residues include His106, His110, and His116.

This sequence belongs to the endoribonuclease YbeY family. Requires Zn(2+) as cofactor.

The protein resides in the cytoplasm. Its function is as follows. Single strand-specific metallo-endoribonuclease involved in late-stage 70S ribosome quality control and in maturation of the 3' terminus of the 16S rRNA. The polypeptide is Endoribonuclease YbeY (Methylobacillus flagellatus (strain ATCC 51484 / DSM 6875 / VKM B-1610 / KT)).